Reading from the N-terminus, the 285-residue chain is NAD kinase (285 aa).

Asp-67 functions as the Proton acceptor in the catalytic mechanism. NAD(+) is bound by residues 67-68 (DG), 141-142 (ND), Arg-152, Lys-169, Asp-171, 182-187 (TGYSLS), and Gln-242.

Belongs to the NAD kinase family. Requires a divalent metal cation as cofactor.

The protein resides in the cytoplasm. The enzyme catalyses NAD(+) + ATP = ADP + NADP(+) + H(+). In terms of biological role, involved in the regulation of the intracellular balance of NAD and NADP, and is a key enzyme in the biosynthesis of NADP. Catalyzes specifically the phosphorylation on 2'-hydroxyl of the adenosine moiety of NAD to yield NADP. The polypeptide is NAD kinase (Trichlorobacter lovleyi (strain ATCC BAA-1151 / DSM 17278 / SZ) (Geobacter lovleyi)).